Consider the following 492-residue polypeptide: Cytochrome P450 monooxygenase rdc4 (492 aa).

Residue Cys-435 participates in heme binding.

This sequence belongs to the cytochrome P450 family. Requires heme as cofactor.

It functions in the pathway secondary metabolite biosynthesis. Functionally, cytochrome P450 monooxygenase; part of the gene cluster that mediates the biosynthesis of radicicol, a resorcylic acid lactone (RAL) that irreversibly inhibits the HSP90 molecular chaperone, an important target for cancer chemotherapy. The radicicol cluster encodes only two apparent post-PKS enzymes, a cytochrome P450 monooxygenase (rdc4) and a non-heme halogenase (rdc2) that could introduce the epoxide and the chlorine, respectively. If this cluster includes all the genes required for radicicol biosynthesis, the remaining structural features of radicicol are presumably generated by the PKSs rdc1 and rdc5. The C-2' ketone could arise if the R-PKS rdc5 and NR-PKS rdc1 each carry out four iterations, in contrast to the five iteration-three iteration split for the hypothemycin PKSs. The origin of the cis 5',6' double bond is not known. The radicicol R-PKS rdc5 ER domain may catalyze either double bond isomerization or reduction in the third iteration. This Metacordyceps chlamydosporia (Nematophagous fungus) protein is Cytochrome P450 monooxygenase rdc4.